We begin with the raw amino-acid sequence, 447 residues long: Adenylosuccinate synthetase (447 aa).

Residues 35–41 and 63–65 contribute to the GTP site; these read GDEGKGK and GHT. The Proton acceptor role is filled by D36. Positions 36 and 63 each coordinate Mg(2+). IMP is bound by residues 36 to 39, 61 to 64, T153, R167, N245, T260, and R324; these read DEGK and NAGH. H64 (proton donor) is an active-site residue. 320 to 326 serves as a coordination point for substrate; that stretch reads VTTKRKR. Residues R326, 352-354, and 435-437 each bind GTP; these read KLD and GVG.

Belongs to the adenylosuccinate synthetase family. In terms of assembly, homodimer. Requires Mg(2+) as cofactor.

It localises to the cytoplasm. It catalyses the reaction IMP + L-aspartate + GTP = N(6)-(1,2-dicarboxyethyl)-AMP + GDP + phosphate + 2 H(+). The protein operates within purine metabolism; AMP biosynthesis via de novo pathway; AMP from IMP: step 1/2. In terms of biological role, plays an important role in the de novo pathway and in the salvage pathway of purine nucleotide biosynthesis. Catalyzes the first committed step in the biosynthesis of AMP from IMP. This chain is Adenylosuccinate synthetase, found in Drosophila erecta (Fruit fly).